Here is a 177-residue protein sequence, read N- to C-terminus: ATP synthase subunit delta (177 aa).

It belongs to the ATPase delta chain family. As to quaternary structure, F-type ATPases have 2 components, F(1) - the catalytic core - and F(0) - the membrane proton channel. F(1) has five subunits: alpha(3), beta(3), gamma(1), delta(1), epsilon(1). F(0) has three main subunits: a(1), b(2) and c(10-14). The alpha and beta chains form an alternating ring which encloses part of the gamma chain. F(1) is attached to F(0) by a central stalk formed by the gamma and epsilon chains, while a peripheral stalk is formed by the delta and b chains.

It localises to the cell inner membrane. F(1)F(0) ATP synthase produces ATP from ADP in the presence of a proton or sodium gradient. F-type ATPases consist of two structural domains, F(1) containing the extramembraneous catalytic core and F(0) containing the membrane proton channel, linked together by a central stalk and a peripheral stalk. During catalysis, ATP synthesis in the catalytic domain of F(1) is coupled via a rotary mechanism of the central stalk subunits to proton translocation. In terms of biological role, this protein is part of the stalk that links CF(0) to CF(1). It either transmits conformational changes from CF(0) to CF(1) or is implicated in proton conduction. In Tolumonas auensis (strain DSM 9187 / NBRC 110442 / TA 4), this protein is ATP synthase subunit delta.